The following is a 220-amino-acid chain: Large ribosomal subunit protein uL1 (220 aa).

Belongs to the universal ribosomal protein uL1 family. As to quaternary structure, part of the 50S ribosomal subunit.

In terms of biological role, binds directly to 23S rRNA. The L1 stalk is quite mobile in the ribosome, and is involved in E site tRNA release. Functionally, protein L1 is also a translational repressor protein, it controls the translation of the L11 operon by binding to its mRNA. The chain is Large ribosomal subunit protein uL1 from Ehrlichia chaffeensis (strain ATCC CRL-10679 / Arkansas).